The sequence spans 142 residues: Large ribosomal subunit protein uL13 (142 aa).

The protein belongs to the universal ribosomal protein uL13 family. Part of the 50S ribosomal subunit.

Its function is as follows. This protein is one of the early assembly proteins of the 50S ribosomal subunit, although it is not seen to bind rRNA by itself. It is important during the early stages of 50S assembly. The sequence is that of Large ribosomal subunit protein uL13 from Shigella dysenteriae serotype 1 (strain Sd197).